A 103-amino-acid polypeptide reads, in one-letter code: UPF0473 protein LBA0420 (103 aa).

It belongs to the UPF0473 family.

This Lactobacillus acidophilus (strain ATCC 700396 / NCK56 / N2 / NCFM) protein is UPF0473 protein LBA0420.